Reading from the N-terminus, the 462-residue chain is Nitrogenase iron-iron protein beta chain (462 aa).

[8Fe-7S] cluster contacts are provided by cysteine 20, cysteine 45, cysteine 104, and serine 143.

It belongs to the NifD/NifK/NifE/NifN family. As to quaternary structure, hexamer of two alpha, two beta, and two delta chains. Requires [8Fe-7S] cluster as cofactor.

The enzyme catalyses N2 + 8 reduced [2Fe-2S]-[ferredoxin] + 16 ATP + 16 H2O = H2 + 8 oxidized [2Fe-2S]-[ferredoxin] + 2 NH4(+) + 16 ADP + 16 phosphate + 6 H(+). In terms of biological role, this iron-iron protein is part of the nitrogenase complex that catalyzes the key enzymatic reactions in nitrogen fixation. Other nitrogenase complexes utilize a molybdenum-iron protein or a vanadium-iron protein. The sequence is that of Nitrogenase iron-iron protein beta chain (anfK) from Azotobacter vinelandii.